Reading from the N-terminus, the 326-residue chain is tRNA-modifying protein YgfZ (326 aa).

Trp-27 and Trp-189 together coordinate folate.

This sequence belongs to the tRNA-modifying YgfZ family.

The protein resides in the cytoplasm. In terms of biological role, folate-binding protein involved in regulating the level of ATP-DnaA and in the modification of some tRNAs. It is probably a key factor in regulatory networks that act via tRNA modification, such as initiation of chromosomal replication. The protein is tRNA-modifying protein YgfZ of Escherichia coli (strain SMS-3-5 / SECEC).